The chain runs to 433 residues: MSADVRDILDMERANTPEVTRDSFLATKKRNFERTKTASRRPEGMHREVFALLYTDKKDAPPLLPTDTALGIGAGYKETKARLGMKKVRKWEWAPFSNPARNDSAVFHHWKRVTDNSTDYPFAKFNKQLEVPSYTMTEYNAHLRNNINNWSKVQTDHLFDLARRFDLRFIVMADRWNRQQHGTKTVEELKERYYEVVALLAKAKNQTSEKKVFVYDVEHERRRKEQLEKLFKRTTQQVEEENMLINEMKKIEARKKERERKTQDLQKLISQADQQNEHASNTPSTRKYEKKLHKKKVHQQPRPSRVDSVVNAIEIGSSGIKFADLRGSGVSLRSQRMKLPANIGQRKVKALEQAIQEFKVDPAPPPTEDICTSFNELRSDMVLLCELRTALSTCVYEMESLKHQYEAACPGKTLNIPPSLVPIKTEALDNSTN.

The interval 1–204 (MSADVRDILD…EVVALLAKAK (204 aa)) is required for nuclear localization. A Myb-like domain is found at 148 to 197 (NNWSKVQTDHLFDLARRFDLRFIVMADRWNRQQHGTKTVEELKERYYEVV). Residues 186-281 (VEELKERYYE…ADQQNEHASN (96 aa)) are a coiled coil. The segment covering 252-264 (EARKKERERKTQD) has biased composition (basic and acidic residues). Residues 252–305 (EARKKERERKTQDLQKLISQADQQNEHASNTPSTRKYEKKLHKKKVHQQPRPSR) are disordered. Over residues 268–285 (LISQADQQNEHASNTPST) the composition is skewed to polar residues. The span at 288 to 299 (YEKKLHKKKVHQ) shows a compositional bias: basic residues.

In terms of assembly, interacts with Rel. Interacts with akirin and Bap55.

It is found in the nucleus. The protein resides in the cytoplasm. Its function is as follows. Involved in transcription repression and activation. Required for larvae and pupal development, and for normal innate immune responses. Involved in modulating the activation of the immune deficiency pathway (Imd), acting either downstream of, or at the level of, the NF-kappa-B factor Rel. Possibly functions with akirin to regulate Rel, and its interaction with the Brahma complex protein Bap55 suggests that it may regulate the IMD pathway at the level of chromatin remodeling. The polypeptide is DNA methyltransferase 1-associated protein 1 (Drosophila melanogaster (Fruit fly)).